The following is a 68-amino-acid chain: Large ribosomal subunit protein uL29 (68 aa).

This sequence belongs to the universal ribosomal protein uL29 family.

The chain is Large ribosomal subunit protein uL29 from Rhodopseudomonas palustris (strain BisA53).